A 246-amino-acid polypeptide reads, in one-letter code: Predicted GPI-anchored protein 33 (246 aa).

An N-terminal signal peptide occupies residues methionine 1 to alanine 16. N-linked (GlcNAc...) asparagine glycosylation occurs at asparagine 214. Asparagine 219 carries GPI-anchor amidated asparagine lipidation. The propeptide at alanine 220–isoleucine 246 is removed in mature form.

The protein localises to the cell membrane. The chain is Predicted GPI-anchored protein 33 (PGA33) from Candida albicans (strain SC5314 / ATCC MYA-2876) (Yeast).